Here is a 244-residue protein sequence, read N- to C-terminus: Phosphoadenosine 5'-phosphosulfate reductase (244 aa).

The Nucleophile; cysteine thiosulfonate intermediate role is filled by C239.

Belongs to the PAPS reductase family. CysH subfamily.

The protein localises to the cytoplasm. It carries out the reaction [thioredoxin]-disulfide + sulfite + adenosine 3',5'-bisphosphate + 2 H(+) = [thioredoxin]-dithiol + 3'-phosphoadenylyl sulfate. Its pathway is sulfur metabolism; hydrogen sulfide biosynthesis; sulfite from sulfate: step 3/3. Its function is as follows. Catalyzes the formation of sulfite from phosphoadenosine 5'-phosphosulfate (PAPS) using thioredoxin as an electron donor. This chain is Phosphoadenosine 5'-phosphosulfate reductase, found in Sodalis glossinidius (strain morsitans).